We begin with the raw amino-acid sequence, 1058 residues long: Outer capsid protein VP4 (1058 aa).

Belongs to the orthoreovirus lambda-2 protein family.

It is found in the virion. It carries out the reaction a 5'-end diphospho-ribonucleoside in mRNA + GTP + H(+) = a 5'-end (5'-triphosphoguanosine)-ribonucleoside in mRNA + diphosphate. The catalysed reaction is a 5'-end (5'-triphosphoguanosine)-ribonucleoside in mRNA + S-adenosyl-L-methionine = a 5'-end (N(7)-methyl 5'-triphosphoguanosine)-ribonucleoside in mRNA + S-adenosyl-L-homocysteine. Outer capsid protein involved in mRNA capping. Catalyzes the last 3 enzymatic activities for formation of the 5' cap structure on the viral plus-strand transcripts, namely the RNA guanylyltransferase, RNA-7N- and RNA-2'O-methyltransferase activities. The sequence is that of Outer capsid protein VP4 (S4) from Lymantria dispar cypovirus 1 (isolate Rao) (LdCPV-1).